The primary structure comprises 110 residues: UPF0251 protein PH0803 (110 aa).

It belongs to the UPF0251 family.

This chain is UPF0251 protein PH0803, found in Pyrococcus horikoshii (strain ATCC 700860 / DSM 12428 / JCM 9974 / NBRC 100139 / OT-3).